A 203-amino-acid polypeptide reads, in one-letter code: uncharacterized protein (203 aa).

A disordered region spans residues 174-203 (LASSKNPRARSPGLDPLGSSETLWSHRGGH).

This is an uncharacterized protein from Homo sapiens (Human).